The following is a 652-amino-acid chain: Carboxypeptidase Z (652 aa).

A signal peptide spans 1–20; that stretch reads MPTTPLLLAALAALAALAVA. The FZ domain occupies 41–163; sequence THSATCVDLH…APEEEGCYDP (123 aa). 5 disulfide bridges follow: C46–C112, C54–C105, C96–C132, C121–C160, and C125–C149. A glycan (N-linked (GlcNAc...) asparagine) is linked at N60. The region spanning 189–505 is the Peptidase M14 domain; sequence AHHSYAQMVR…EPLLNFLEMV (317 aa). Zn(2+)-binding residues include H251 and E254. N-linked (GlcNAc...) asparagine glycosylation occurs at N284. A Zn(2+)-binding site is contributed by H383. The Proton donor/acceptor role is filled by E475. The tract at residues 594–628 is disordered; that stretch reads FLPGPSRALPRSLDPQGAPAQLDFEPPRARRQPAS.

The protein belongs to the peptidase M14 family. Requires Zn(2+) as cofactor. Abundantly expressed in the placenta, with low to moderate levels in the brain, lung, thymus and kidney.

It is found in the secreted. It localises to the extracellular space. The protein resides in the extracellular matrix. With respect to regulation, inhibited by 2-mercaptomethyl-3-guanidinoethylthiopropanoic acid (MGTA) and guanidinoethylmercaptosuccinic acid (GEMSA). Inhibited by chelating agents such as EDTA and EGTA. Cleaves substrates with C-terminal arginine residues. Probably modulates the Wnt signaling pathway, by cleaving some undefined protein. May play a role in cleavage during prohormone processing. The protein is Carboxypeptidase Z (Cpz) of Rattus norvegicus (Rat).